Reading from the N-terminus, the 328-residue chain is ABC transporter I family member 20 (328 aa).

Residues 14–257 (VEISGLRFTY…SKKSLMRTVE (244 aa)) form the ABC transporter domain. ATP is bound at residue 55–62 (GSNGAGKT). A disordered region spans residues 263-295 (ERDEERKRRKERKANGLPEFETRTEESRVTGDP). Over residues 282–291 (FETRTEESRV) the composition is skewed to basic and acidic residues.

The protein belongs to the ABC transporter superfamily. ABCI family.

It localises to the cytoplasm. The sequence is that of ABC transporter I family member 20 (ABCI20) from Arabidopsis thaliana (Mouse-ear cress).